We begin with the raw amino-acid sequence, 842 residues long: Glycogen phosphorylase, muscle form (842 aa).

Ser2 is modified (N-acetylserine). The residue at position 15 (Ser15) is a Phosphoserine; by PHK; in form phosphorylase A. AMP contacts are provided by Asp43 and Tyr76. Tyr204 and Tyr227 each carry phosphotyrosine. AMP is bound at residue Arg310–Ser319. Ser430 is subject to Phosphoserine. A Phosphotyrosine modification is found at Tyr473. Ser514 bears the Phosphoserine mark. Position 681 is an N6-(pyridoxal phosphate)lysine (Lys681). Phosphoserine is present on residues Ser747 and Ser748.

This sequence belongs to the glycogen phosphorylase family. In terms of assembly, homodimer. Homotetramer; to form the enzymatically active phosphorylase A. It depends on pyridoxal 5'-phosphate as a cofactor. Phosphorylation of Ser-15 converts phosphorylase B (unphosphorylated) to phosphorylase A.

The catalysed reaction is [(1-&gt;4)-alpha-D-glucosyl](n) + phosphate = [(1-&gt;4)-alpha-D-glucosyl](n-1) + alpha-D-glucose 1-phosphate. Allosterically regulated through the non-covalent binding of metabolites, being activated by AMP and inhibited by ATP, ADP, and glucose-6-phosphate. The activity is also controlled by post-translational modifications including phosphorylation. Allosteric enzyme that catalyzes the rate-limiting step in glycogen catabolism, the phosphorolytic cleavage of glycogen to produce glucose-1-phosphate, and plays a central role in maintaining cellular and organismal glucose homeostasis. The chain is Glycogen phosphorylase, muscle form from Mus musculus (Mouse).